The chain runs to 268 residues: Aliphatic sulfonates import ATP-binding protein SsuB 2 (268 aa).

The ABC transporter domain maps to 15–236; that stretch reads LAVRKLQKTF…VRGSHRLAAL (222 aa). ATP is bound at residue 47-54; the sequence is GRSGCGKS.

This sequence belongs to the ABC transporter superfamily. Aliphatic sulfonates importer (TC 3.A.1.17.2) family. The complex is composed of two ATP-binding proteins (SsuB), two transmembrane proteins (SsuC) and a solute-binding protein (SsuA).

It localises to the cell inner membrane. It catalyses the reaction ATP + H2O + aliphatic sulfonate-[sulfonate-binding protein]Side 1 = ADP + phosphate + aliphatic sulfonateSide 2 + [sulfonate-binding protein]Side 1.. Functionally, part of the ABC transporter complex SsuABC involved in aliphatic sulfonates import. Responsible for energy coupling to the transport system. The polypeptide is Aliphatic sulfonates import ATP-binding protein SsuB 2 (Pseudomonas fluorescens (strain ATCC BAA-477 / NRRL B-23932 / Pf-5)).